A 405-amino-acid polypeptide reads, in one-letter code: uncharacterized protein (405 aa).

A signal peptide spans 1–20 (MKAKLALSIIGLVLASLVAG). C21 carries the N-acetylcysteine modification. A lipid anchor (S-archaeol cysteine) is attached at C21.

Belongs to the BMP lipoprotein family.

The protein resides in the cell membrane. This is an uncharacterized protein from Pyrococcus horikoshii (strain ATCC 700860 / DSM 12428 / JCM 9974 / NBRC 100139 / OT-3).